The following is a 471-amino-acid chain: UDP-N-acetylmuramate--L-alanine ligase (471 aa).

114–120 (GTHGKTT) is an ATP binding site.

This sequence belongs to the MurCDEF family.

It localises to the cytoplasm. It carries out the reaction UDP-N-acetyl-alpha-D-muramate + L-alanine + ATP = UDP-N-acetyl-alpha-D-muramoyl-L-alanine + ADP + phosphate + H(+). It participates in cell wall biogenesis; peptidoglycan biosynthesis. Its function is as follows. Cell wall formation. This Chlorobaculum parvum (strain DSM 263 / NCIMB 8327) (Chlorobium vibrioforme subsp. thiosulfatophilum) protein is UDP-N-acetylmuramate--L-alanine ligase.